Here is a 507-residue protein sequence, read N- to C-terminus: Sulfatase (507 aa).

The N-terminal stretch at 1-18 (MKTRYFLLLGICMLSCRT) is a signal peptide. Positions 39, 40, and 79 each coordinate Ca(2+). Cysteine 79 serves as the catalytic Nucleophile. The residue at position 79 (cysteine 79) is a 3-oxoalanine (Cys). Histidine 139 is an active-site residue. Aspartate 325 and histidine 326 together coordinate Ca(2+).

This sequence belongs to the sulfatase family. Requires Ca(2+) as cofactor. In terms of processing, the conversion to 3-oxoalanine (also known as C-formylglycine, FGly), of a serine or cysteine residue in prokaryotes and of a cysteine residue in eukaryotes, is critical for catalytic activity. This post-translational modification is severely defective in multiple sulfatase deficiency (MSD).

The protein resides in the periplasm. Its function is as follows. Sulfatase that may be involved in ulvan degradation. Ulvan is the main polysaccharide component of the Ulvales (green seaweed) cell wall. It is composed of disaccharide building blocks comprising 3-sulfated rhamnose (Rha3S) linked to D-glucuronic acid (GlcA), L-iduronic acid (IduA), or D-xylose (Xyl). Has no activity on different ulvan polymers. The chain is Sulfatase from Formosa agariphila (strain DSM 15362 / KCTC 12365 / LMG 23005 / KMM 3901 / M-2Alg 35-1).